The primary structure comprises 99 residues: Phosphoribosyl-ATP pyrophosphatase (99 aa).

This sequence belongs to the PRA-PH family.

The protein resides in the cytoplasm. It catalyses the reaction 1-(5-phospho-beta-D-ribosyl)-ATP + H2O = 1-(5-phospho-beta-D-ribosyl)-5'-AMP + diphosphate + H(+). Its pathway is amino-acid biosynthesis; L-histidine biosynthesis; L-histidine from 5-phospho-alpha-D-ribose 1-diphosphate: step 2/9. This Methanosphaerula palustris (strain ATCC BAA-1556 / DSM 19958 / E1-9c) protein is Phosphoribosyl-ATP pyrophosphatase.